We begin with the raw amino-acid sequence, 101 residues long: Small ribosomal subunit protein uS14 (101 aa).

Belongs to the universal ribosomal protein uS14 family. As to quaternary structure, part of the 30S ribosomal subunit. Contacts proteins S3 and S10.

In terms of biological role, binds 16S rRNA, required for the assembly of 30S particles and may also be responsible for determining the conformation of the 16S rRNA at the A site. In Shewanella oneidensis (strain ATCC 700550 / JCM 31522 / CIP 106686 / LMG 19005 / NCIMB 14063 / MR-1), this protein is Small ribosomal subunit protein uS14.